We begin with the raw amino-acid sequence, 96 residues long: Transmembrane protein PMIS2 (96 aa).

The next 2 membrane-spanning stretches (helical) occupy residues 31–51 (VMLA…AIYF) and 76–96 (WFNM…VLVL).

Belongs to the CD225/Dispanin family. As to expression, specifically expressed in testis.

Its subcellular location is the membrane. May play a role in spermatozoa mobility. The protein is Transmembrane protein PMIS2 of Mus musculus (Mouse).